Reading from the N-terminus, the 167-residue chain is Brain ribonuclease (167 aa).

A signal peptide spans 1–26 (MALKSLVLLSLLVLVLLLVQVQPSLG). Residues Lys33 and Arg36 each coordinate substrate. His38 serves as the catalytic Proton acceptor. Disulfide bonds link Cys52/Cys110, Cys66/Cys121, Cys84/Cys136, and Cys91/Cys98. 67-71 (KPVNT) contacts substrate. Asn88 carries N-linked (GlcNAc...) asparagine glycosylation. Lys92 and Arg111 together coordinate substrate. His145 serves as the catalytic Proton donor. Residue Thr155 is glycosylated (O-linked (GalNAc...) threonine). Ser159 is a glycosylation site (O-linked (GalNAc...) serine).

Belongs to the pancreatic ribonuclease family.

Its subcellular location is the secreted. In Bos taurus (Bovine), this protein is Brain ribonuclease (BRN).